The primary structure comprises 496 residues: Amidophosphoribosyltransferase (496 aa).

Positions 1–21 are excised as a propeptide; sequence MNQSHSFPTDDPLDGDTLHEE. The active-site Nucleophile is Cys-22. The 220-residue stretch at 22–241 folds into the Glutamine amidotransferase type-2 domain; sequence CGVFGILGHP…NGEVIICEIQ (220 aa).

It in the C-terminal section; belongs to the purine/pyrimidine phosphoribosyltransferase family.

The enzyme catalyses 5-phospho-beta-D-ribosylamine + L-glutamate + diphosphate = 5-phospho-alpha-D-ribose 1-diphosphate + L-glutamine + H2O. Its pathway is purine metabolism; IMP biosynthesis via de novo pathway; N(1)-(5-phospho-D-ribosyl)glycinamide from 5-phospho-alpha-D-ribose 1-diphosphate: step 1/2. Its function is as follows. Catalyzes the formation of phosphoribosylamine from phosphoribosylpyrophosphate (PRPP) and glutamine. This chain is Amidophosphoribosyltransferase, found in Rhizobium etli (strain ATCC 51251 / DSM 11541 / JCM 21823 / NBRC 15573 / CFN 42).